Here is a 405-residue protein sequence, read N- to C-terminus: Acetylornithine aminotransferase (405 aa).

Pyridoxal 5'-phosphate-binding positions include 107–108 and phenylalanine 140; that span reads GA. Residue arginine 143 coordinates N(2)-acetyl-L-ornithine. Residue 225-228 participates in pyridoxal 5'-phosphate binding; the sequence is DEVQ. Lysine 254 bears the N6-(pyridoxal phosphate)lysine mark. N(2)-acetyl-L-ornithine is bound at residue serine 282. Position 283 (threonine 283) interacts with pyridoxal 5'-phosphate.

This sequence belongs to the class-III pyridoxal-phosphate-dependent aminotransferase family. ArgD subfamily. Homodimer. Pyridoxal 5'-phosphate is required as a cofactor.

It is found in the cytoplasm. The enzyme catalyses N(2)-acetyl-L-ornithine + 2-oxoglutarate = N-acetyl-L-glutamate 5-semialdehyde + L-glutamate. Its pathway is amino-acid biosynthesis; L-arginine biosynthesis; N(2)-acetyl-L-ornithine from L-glutamate: step 4/4. In Shewanella oneidensis (strain ATCC 700550 / JCM 31522 / CIP 106686 / LMG 19005 / NCIMB 14063 / MR-1), this protein is Acetylornithine aminotransferase.